A 294-amino-acid polypeptide reads, in one-letter code: Serine/threonine-protein kinase Aurora-1 (294 aa).

A Protein kinase domain is found at 31–282 (FDIGKPLGRG…LHKLLEHPWI (252 aa)). Residues 37–45 (LGRGKFGHV) and Lys-60 contribute to the ATP site. The active-site Proton acceptor is the Asp-154. Ser-176 is modified (phosphoserine). The residue at position 185 (Thr-185) is a Phosphothreonine.

It belongs to the protein kinase superfamily. Ser/Thr protein kinase family. Aurora subfamily. Interacts with TPX2. Phosphorylation at Thr-185 may regulate activity and degradation of AUR1 in a cell cycle dependent manner. Abundant in roots, flowers and flower buds, low or absent in expanded leaves, stems and siliques.

The protein localises to the nucleus membrane. It localises to the cytoplasm. Its subcellular location is the cytoskeleton. The protein resides in the spindle. It is found in the spindle pole. The protein localises to the phragmoplast. The enzyme catalyses L-seryl-[protein] + ATP = O-phospho-L-seryl-[protein] + ADP + H(+). It carries out the reaction L-threonyl-[protein] + ATP = O-phospho-L-threonyl-[protein] + ADP + H(+). In terms of biological role, phosphorylates specifically 'Ser-10' of histone H3 in vitro and colocalizes with phosphorylated histone H3 during mitosis. Associates with cytoskeletal structures that are necessary for cytokinesis and with the microtubule spindle. Also colocalizes with gamma-tubulin and function in microtubule organizing centers (MTOCs). In contrast with the mammalian B-type Aurora, AUR1 has no kinase activity toward 'Ser-28' of histone H3. This Arabidopsis thaliana (Mouse-ear cress) protein is Serine/threonine-protein kinase Aurora-1 (AUR1).